The following is a 433-amino-acid chain: Glutamyl-tRNA reductase (433 aa).

Residues 49–52 (TCNR), Ser-109, 114–116 (EGQ), and Gln-120 contribute to the substrate site. Cys-50 serves as the catalytic Nucleophile. 189–194 (GAGKMS) lines the NADP(+) pocket.

It belongs to the glutamyl-tRNA reductase family. Homodimer.

The enzyme catalyses (S)-4-amino-5-oxopentanoate + tRNA(Glu) + NADP(+) = L-glutamyl-tRNA(Glu) + NADPH + H(+). It functions in the pathway porphyrin-containing compound metabolism; protoporphyrin-IX biosynthesis; 5-aminolevulinate from L-glutamyl-tRNA(Glu): step 1/2. The protein operates within porphyrin-containing compound metabolism; chlorophyll biosynthesis. In terms of biological role, catalyzes the NADPH-dependent reduction of glutamyl-tRNA(Glu) to glutamate 1-semialdehyde (GSA). This Acaryochloris marina (strain MBIC 11017) protein is Glutamyl-tRNA reductase.